The following is an 87-amino-acid chain: MAHKKGGGSTRNGRDSASKRLGIKKFGGEHVLAGNILVRQRGTQHNPGKNVGLGKDHTLYALLEGTVLFKKGTKGKSYVSVEPAKDN.

The tract at residues 1 to 21 is disordered; the sequence is MAHKKGGGSTRNGRDSASKRL.

This sequence belongs to the bacterial ribosomal protein bL27 family.

This Amoebophilus asiaticus (strain 5a2) protein is Large ribosomal subunit protein bL27.